We begin with the raw amino-acid sequence, 503 residues long: Maturase K (503 aa).

It belongs to the intron maturase 2 family. MatK subfamily.

It is found in the plastid. The protein resides in the chloroplast. Its function is as follows. Usually encoded in the trnK tRNA gene intron. Probably assists in splicing its own and other chloroplast group II introns. This Panax quinquefolius (American ginseng) protein is Maturase K.